Consider the following 1024-residue polypeptide: Beta-galactosidase (1024 aa).

Positions 103 and 202 each coordinate substrate. A Na(+)-binding site is contributed by D202. E417, H419, and E462 together coordinate Mg(2+). Residues E462 and 538–541 (EYAH) each bind substrate. E462 functions as the Proton donor in the catalytic mechanism. Catalysis depends on E538, which acts as the Nucleophile. A Mg(2+)-binding site is contributed by N598. Residues F602 and N605 each coordinate Na(+). Residues N605 and W1000 each coordinate substrate.

This sequence belongs to the glycosyl hydrolase 2 family. As to quaternary structure, homotetramer. It depends on Mg(2+) as a cofactor. Na(+) is required as a cofactor.

The enzyme catalyses Hydrolysis of terminal non-reducing beta-D-galactose residues in beta-D-galactosides.. The polypeptide is Beta-galactosidase (Escherichia coli (strain SMS-3-5 / SECEC)).